Reading from the N-terminus, the 29-residue chain is Cytochrome b6-f complex subunit 8 (29 aa).

The chain crosses the membrane as a helical span at residues 3–23 (IVNIAWAALMVVSTFSLTLVV).

The protein belongs to the PetN family. The 4 large subunits of the cytochrome b6-f complex are cytochrome b6, subunit IV (17 kDa polypeptide, PetD), cytochrome f and the Rieske protein, while the 4 small subunits are PetG, PetL, PetM and PetN. The complex functions as a dimer.

It localises to the plastid. The protein localises to the chloroplast thylakoid membrane. Functionally, component of the cytochrome b6-f complex, which mediates electron transfer between photosystem II (PSII) and photosystem I (PSI), cyclic electron flow around PSI, and state transitions. This chain is Cytochrome b6-f complex subunit 8, found in Huperzia lucidula (Shining clubmoss).